The chain runs to 442 residues: Hydrolase phmG (442 aa).

Serine 259 acts as the Nucleophile in catalysis.

The protein belongs to the AB hydrolase superfamily. FUS2 hydrolase family. In terms of assembly, homodimer.

It functions in the pathway mycotoxin biosynthesis. In terms of biological role, hydrolyase; part of the gene cluster that mediates the biosynthesis of the mycotoxins phomacins, leucine-derived cytochalasans with potent actin polymerization-inhibitory activities and monocot-specific antigerminative activities. The first step in the pathway is catalyzed by the hybrid PKS-NRPS phmA, assisted by the enoyl reductase phmE, that are responsible for fusion of the leucine precursor and the polyketide backbone to produce a 2-pyrrolidone intermediate. The polyketide synthase module (PKS) of phmA is responsible for the synthesis of the polyketide backbone and the downstream nonribosomal peptide synthetase (NRPS) amidates the carboxyl end of the polyketide with the leucine precursor. Because phmA lacks a designated enoylreductase (ER) domain, the required activity is provided the enoyl reductase phmE. Reduction by the hydrolyase phmG, followed by dehydration and intra-molecular Diels-Alder cyclization by the Diels-Alderase phmD then yield the required isoindolone-fused macrocycle. A number of oxidative steps catalyzed by the tailoring cytochrome P450 monooxygenase phmB, the FAD-linked oxidoreductase phmC and the short-chain dehydrogenase/reductase phmF, are further required to afford the final products, phomacin D and phomacin E. This Phaeosphaeria nodorum (strain SN15 / ATCC MYA-4574 / FGSC 10173) (Glume blotch fungus) protein is Hydrolase phmG.